The chain runs to 986 residues: Ephrin type-A receptor 4-A (986 aa).

The signal sequence occupies residues 1–20; sequence MAGIVHGILFCGLFGLCWAV. Over 21 to 547 the chain is Extracellular; the sequence is TGSRIYPASE…MIGEGASPTV (527 aa). An Eph LBD domain is found at 30–209; it reads EVTLLDSRSV…FYKKCPLTVR (180 aa). 2 Fibronectin type-III domains span residues 328-438 and 439-536; these read PPSA…TNQA and APST…TVPS. Residues asparagine 340 and asparagine 407 are each glycosylated (N-linked (GlcNAc...) asparagine). The helical transmembrane segment at 548–569 threads the bilayer; it reads LLVSVAGSIVLVVILIAAFVIS. Residues 570-986 lie on the Cytoplasmic side of the membrane; that stretch reads RRRSKYSKAK…QQIQGRMVPV (417 aa). Residues tyrosine 595 and tyrosine 601 each carry the phosphotyrosine; by autocatalysis modification. Positions 620 to 881 constitute a Protein kinase domain; sequence IKIEKVIGVG…QIVSMLDKLI (262 aa). Residues 626 to 634 and lysine 652 each bind ATP; that span reads IGVGEFGEV. The active-site Proton acceptor is aspartate 745. A phosphotyrosine; by autocatalysis mark is found at tyrosine 778 and tyrosine 928. The SAM domain maps to 911–975; it reads SQVASVLDWL…LSSVQGMRTQ (65 aa). The short motif at 984–986 is the PDZ-binding element; the sequence is VPV.

This sequence belongs to the protein kinase superfamily. Tyr protein kinase family. Ephrin receptor subfamily.

It localises to the cell membrane. The protein localises to the early endosome. The catalysed reaction is L-tyrosyl-[protein] + ATP = O-phospho-L-tyrosyl-[protein] + ADP + H(+). Functionally, receptor tyrosine kinase which binds membrane-bound ephrin family ligands residing on adjacent cells, leading to contact-dependent bidirectional signaling into neighboring cells. The signaling pathway downstream of the receptor is referred to as forward signaling while the signaling pathway downstream of the ephrin ligand is referred to as reverse signaling. Highly promiscuous, it has the unique property among Eph receptors to bind and to be physiologically activated by both GPI-anchored ephrin-A and transmembrane ephrin-B ligands including EFNA1 and EFNB3. Upon activation by ephrin ligands, modulates cell morphology and integrin-dependent cell adhesion through regulation of the Rac, Rap and Rho GTPases activity. Plays an important role in the development of the nervous system controlling different steps of axonal guidance including the establishment of the corticospinal projections. In Xenopus laevis (African clawed frog), this protein is Ephrin type-A receptor 4-A (epha4-a).